A 227-amino-acid chain; its full sequence is Large ribosomal subunit protein uL3 (227 aa).

Residues 129–154 (GMQPVSHGQSDRTRSRGSSGAQGPQK) form a disordered region.

This sequence belongs to the universal ribosomal protein uL3 family. As to quaternary structure, part of the 50S ribosomal subunit. Forms a cluster with proteins L14 and L19.

Functionally, one of the primary rRNA binding proteins, it binds directly near the 3'-end of the 23S rRNA, where it nucleates assembly of the 50S subunit. In Endomicrobium trichonymphae, this protein is Large ribosomal subunit protein uL3.